The primary structure comprises 216 residues: Elongation factor Ts (216 aa).

The involved in Mg(2+) ion dislocation from EF-Tu stretch occupies residues 81 to 84; it reads TDFV.

The protein belongs to the EF-Ts family.

The protein resides in the cytoplasm. Associates with the EF-Tu.GDP complex and induces the exchange of GDP to GTP. It remains bound to the aminoacyl-tRNA.EF-Tu.GTP complex up to the GTP hydrolysis stage on the ribosome. This chain is Elongation factor Ts, found in Citrifermentans bemidjiense (strain ATCC BAA-1014 / DSM 16622 / JCM 12645 / Bem) (Geobacter bemidjiensis).